Consider the following 500-residue polypeptide: L-arabinose isomerase (500 aa).

Positions 306, 333, 350, and 450 each coordinate Mn(2+).

It belongs to the arabinose isomerase family. As to quaternary structure, homohexamer. Requires Mn(2+) as cofactor.

The catalysed reaction is beta-L-arabinopyranose = L-ribulose. Its pathway is carbohydrate degradation; L-arabinose degradation via L-ribulose; D-xylulose 5-phosphate from L-arabinose (bacterial route): step 1/3. Functionally, catalyzes the conversion of L-arabinose to L-ribulose. This chain is L-arabinose isomerase, found in Enterobacter sp. (strain 638).